Reading from the N-terminus, the 305-residue chain is 4-diphosphocytidyl-2-C-methyl-D-erythritol kinase (305 aa).

Lys-17 is an active-site residue. 111-121 contacts ATP; the sequence is PVASGIGGGSA. The active site involves Asp-154.

It belongs to the GHMP kinase family. IspE subfamily.

The enzyme catalyses 4-CDP-2-C-methyl-D-erythritol + ATP = 4-CDP-2-C-methyl-D-erythritol 2-phosphate + ADP + H(+). It participates in isoprenoid biosynthesis; isopentenyl diphosphate biosynthesis via DXP pathway; isopentenyl diphosphate from 1-deoxy-D-xylulose 5-phosphate: step 3/6. Catalyzes the phosphorylation of the position 2 hydroxy group of 4-diphosphocytidyl-2C-methyl-D-erythritol. This Gluconacetobacter diazotrophicus (strain ATCC 49037 / DSM 5601 / CCUG 37298 / CIP 103539 / LMG 7603 / PAl5) protein is 4-diphosphocytidyl-2-C-methyl-D-erythritol kinase.